Reading from the N-terminus, the 600-residue chain is MTNLTRFSVAPLHTMTRRLADVASGRVAPDLVITGARVLSTYSERILRDRELWITGGRVAAVKPAGAHKALPSGFTIYDAAGGIIAPGLVDPHIHIESSMVTACAYAEAALLNGTTTIFCDSHEIGNVMDTAGVEAMLEDARQAPLSIFLTVPSTVPATSAALETAGGDLTPDKIAGLFDRWPEAVALGEKMDFVPVCMGDERSHAILAAALQRGRPVSGHVYGREFVAAYAASGVTDTHEAIDRDIADDLLDAGVWIFLRGGPPTTPWHSLPQAIRTITELGASHKRTAVCTDDRDADDLMLFGLDWVVREAVKAGMSPEQAWSMGSLHGATRFAMDGEIGGLGGGRRADLVLLDDGLKPQSTWYGGELVVDQGKITSLLDQALSQRYQYPKAAYATVKLPAQMKLTPELPAKACTVNAIKTALPGITLIHEKVAIKPANDWDTLFARHGLCFVAVIERHGKSAGNVAHGLLKDFGLKRGAVASSVGHDSHNIIVAGTNEADMQTAVAAIGAQQGGVCVVADGKVRAMVPLPIAGLLSDKRVTAVAEEVKLLKKEWAEAGCTIPYMGFNLIPLSVIPEIRITDKGLVLVPQMELAPLFE.

Belongs to the metallo-dependent hydrolases superfamily. Adenine deaminase family. The cofactor is Mn(2+).

It carries out the reaction adenine + H2O + H(+) = hypoxanthine + NH4(+). The protein is Adenine deaminase 2 of Bradyrhizobium sp. (strain ORS 278).